A 160-amino-acid polypeptide reads, in one-letter code: Putative 4-hydroxy-4-methyl-2-oxoglutarate aldolase (160 aa).

Substrate contacts are provided by residues 75-78 (GDQL) and R97. D98 lines the a divalent metal cation pocket.

This sequence belongs to the class II aldolase/RraA-like family. As to quaternary structure, homotrimer. Requires a divalent metal cation as cofactor.

It carries out the reaction 4-hydroxy-4-methyl-2-oxoglutarate = 2 pyruvate. The catalysed reaction is oxaloacetate + H(+) = pyruvate + CO2. Its function is as follows. Catalyzes the aldol cleavage of 4-hydroxy-4-methyl-2-oxoglutarate (HMG) into 2 molecules of pyruvate. Also contains a secondary oxaloacetate (OAA) decarboxylase activity due to the common pyruvate enolate transition state formed following C-C bond cleavage in the retro-aldol and decarboxylation reactions. In Vibrio parahaemolyticus serotype O3:K6 (strain RIMD 2210633), this protein is Putative 4-hydroxy-4-methyl-2-oxoglutarate aldolase.